The sequence spans 239 residues: Tetraspanin-9 (239 aa).

A run of 3 helical transmembrane segments spans residues 14–34 (FLFNLIFWLCGCGLLGVGIWL), 56–76 (LVIAIGTIVMVTGFLGCLGAI), and 86–106 (FFIVLLIILLAELILIILFFV). N-linked (GlcNAc...) asparagine glycans are attached at residues asparagine 180 and asparagine 181. Residues 204–224 (VLGTVGMCLLITQILGMAFSM) traverse the membrane as a helical segment.

This sequence belongs to the tetraspanin (TM4SF) family. As to quaternary structure, found in a complex with GP6. Glycosylated.

The protein resides in the membrane. This Ovis aries (Sheep) protein is Tetraspanin-9 (TSPAN9).